Here is a 359-residue protein sequence, read N- to C-terminus: tRNA-specific 2-thiouridylase MnmA (359 aa).

ATP-binding positions include 9–16 (GISGGVDS) and methionine 35. The tract at residues 95–97 (NPD) is interaction with target base in tRNA. The Nucleophile role is filled by cysteine 100. Cysteines 100 and 197 form a disulfide. Position 124 (glycine 124) interacts with ATP. Positions 147–149 (KDQ) are interaction with tRNA. Catalysis depends on cysteine 197, which acts as the Cysteine persulfide intermediate. Residues 309–310 (RY) form an interaction with tRNA region.

This sequence belongs to the MnmA/TRMU family.

It is found in the cytoplasm. The catalysed reaction is S-sulfanyl-L-cysteinyl-[protein] + uridine(34) in tRNA + AH2 + ATP = 2-thiouridine(34) in tRNA + L-cysteinyl-[protein] + A + AMP + diphosphate + H(+). Its function is as follows. Catalyzes the 2-thiolation of uridine at the wobble position (U34) of tRNA, leading to the formation of s(2)U34. The protein is tRNA-specific 2-thiouridylase MnmA of Francisella tularensis subsp. tularensis (strain WY96-3418).